Reading from the N-terminus, the 450-residue chain is Glucose-6-phosphate isomerase (450 aa).

Glutamate 291 serves as the catalytic Proton donor. Residues histidine 312 and lysine 426 contribute to the active site.

The protein belongs to the GPI family.

It is found in the cytoplasm. It catalyses the reaction alpha-D-glucose 6-phosphate = beta-D-fructose 6-phosphate. It functions in the pathway carbohydrate biosynthesis; gluconeogenesis. The protein operates within carbohydrate degradation; glycolysis; D-glyceraldehyde 3-phosphate and glycerone phosphate from D-glucose: step 2/4. In terms of biological role, catalyzes the reversible isomerization of glucose-6-phosphate to fructose-6-phosphate. The chain is Glucose-6-phosphate isomerase from Clostridium perfringens (strain ATCC 13124 / DSM 756 / JCM 1290 / NCIMB 6125 / NCTC 8237 / Type A).